A 311-amino-acid polypeptide reads, in one-letter code: uncharacterized protein (311 aa).

10 helical membrane passes run 13-33 (STAVIKMVISMVIFGSIGFFS), 41-61 (FELVFVRCLCATLFLGFCWLA), 76-96 (LQTLACGFFLVFNWVFLFKSF), 103-123 (IAISVYHLAPVLVLLLGSFFY), 128-148 (NVISVSSIIICFLGTALISGI), 157-177 (LMGSGIIWAVLAALFYAFTTL), 192-212 (FLQTGLGVIILIPFIHFGAFA), 218-238 (NWIMVVSTGIIHTGIVYLLFF), 248-268 (FISIIVFLDPAVAIVLDTVFT), and 272-292 (PDLYQTLGIVMIFAGMALTLV). EamA domains follow at residues 24–147 (VIFG…LISG) and 166–292 (VLAA…LTLV).

The protein belongs to the EamA transporter family.

The protein resides in the cell membrane. This is an uncharacterized protein from Bacillus subtilis (strain 168).